The chain runs to 21 residues: Peptide Hact-2 (21 aa).

3 disulfide bridges follow: Cys-1–Cys-18, Cys-5–Cys-14, and Cys-9–Cys-20.

In terms of tissue distribution, expressed in tentacles.

Its subcellular location is the nematocyst. It localises to the secreted. Peptide of unknown function. Does not exhibit antimicrobial activity against Escherichia coli and Staphylococcus aureus. Promotes cell proliferation of human fibroblast skin cells. Does not exhibit any effect on voltage-gated ion channels, including potassium, sodium, and calcium channels. The protein is Peptide Hact-2 of Heliofungia actiniformis (Mushroom coral).